Consider the following 123-residue polypeptide: U11/U12 small nuclear ribonucleoprotein 25 kDa protein (123 aa).

The Ubiquitin-like domain occupies 32–123 (MTVRVCKMDG…VSFIKKLRQK (92 aa)).

Component of the U11/U12 snRNPs that are part of the U12-type spliceosome.

The protein resides in the nucleus. This chain is U11/U12 small nuclear ribonucleoprotein 25 kDa protein (SNRNP25), found in Bos taurus (Bovine).